We begin with the raw amino-acid sequence, 129 residues long: Small ribosomal subunit protein uS11 (129 aa).

Belongs to the universal ribosomal protein uS11 family. In terms of assembly, part of the 30S ribosomal subunit. Interacts with proteins S7 and S18. Binds to IF-3.

Its function is as follows. Located on the platform of the 30S subunit, it bridges several disparate RNA helices of the 16S rRNA. Forms part of the Shine-Dalgarno cleft in the 70S ribosome. In Glaesserella parasuis serovar 5 (strain SH0165) (Haemophilus parasuis), this protein is Small ribosomal subunit protein uS11.